Here is a 603-residue protein sequence, read N- to C-terminus: ADP-ribosylation factor-binding protein GGA2 (603 aa).

A disordered region spans residues 1 to 22; sequence MAATAVAAGTGSPAGTESAEGG. Residues 13–22 show a composition bias toward low complexity; sequence PAGTESAEGG. The region spanning 36–166 is the VHS domain; sequence ATDPSMAEQD…MLKKQGIIKQ (131 aa). One can recognise a GAT domain in the interval 190-317; sequence DEEKSKLLTR…GVRLYKQVVE (128 aa). The tract at residues 318-473 is unstructured hinge; it reads GRVSAGNAVP…VFVPLESVKP (156 aa). The region spanning 474 to 595 is the GAE domain; the sequence is SSLPPIVVYD…SEVGEVKDFP (122 aa).

Belongs to the GGA protein family. In terms of assembly, monomer. Interacts with NECAP1, TSG101, UBC and AFTPH/aftiphilin. Interacts with CNST. Interacts with GGA1 and GGA3. Binds to clathrin and activated ARFs, such as ARF1, ARF5 and ARF6. Binds RABEP1 and RABGEF1. Interacts with the type-I membrane proteins LRP3, M6PR/CD-MPR, IGF2R/CI-MPR and BACE1. Interacts (via N-terminal VHS domain) with SORL1/sorLA and SORT1 (via C-terminal cytosolic domain). Binds the accessory proteins CCDC91, P200, SYNRG, EPN4 and NECAP2. Interacts with ADRA2B. Interacts (via VHS domain) with PIK4B; the interaction is important for PIK4B location at the Golgi apparatus membrane. Ubiquitinated.

It is found in the golgi apparatus. It localises to the trans-Golgi network membrane. Its subcellular location is the endosome membrane. The protein resides in the early endosome membrane. In terms of biological role, plays a role in protein sorting and trafficking between the trans-Golgi network (TGN) and endosomes. Mediates the ARF-dependent recruitment of clathrin to the TGN and binds ubiquitinated proteins and membrane cargo molecules with a cytosolic acidic cluster-dileucine (DXXLL) motif. Mediates export of the GPCR receptor ADRA2B to the cell surface. Regulates retrograde transport of phosphorylated form of BACE1 from endosomes to the trans-Golgi network. This Mus musculus (Mouse) protein is ADP-ribosylation factor-binding protein GGA2 (Gga2).